We begin with the raw amino-acid sequence, 315 residues long: Energy-coupling factor transporter ATP-binding protein EcfA2 (315 aa).

Residues 31–275 form the ABC transporter domain; it reads IILDNVSYTY…QELLSKIQIE (245 aa). 68–75 is an ATP binding site; it reads GTTGSGKS.

Belongs to the ABC transporter superfamily. Energy-coupling factor EcfA family. Forms a stable energy-coupling factor (ECF) transporter complex composed of 2 membrane-embedded substrate-binding proteins (S component), 2 ATP-binding proteins (A component) and 2 transmembrane proteins (T component).

The protein resides in the cell membrane. ATP-binding (A) component of a common energy-coupling factor (ECF) ABC-transporter complex. Unlike classic ABC transporters this ECF transporter provides the energy necessary to transport a number of different substrates. The polypeptide is Energy-coupling factor transporter ATP-binding protein EcfA2 (Mesoplasma florum (strain ATCC 33453 / NBRC 100688 / NCTC 11704 / L1) (Acholeplasma florum)).